A 583-amino-acid polypeptide reads, in one-letter code: Sensor protein SrrB (583 aa).

The Cytoplasmic segment spans residues 1–11 (MMSRLNSVVIK). The chain crosses the membrane as a helical span at residues 12-32 (LWLTIILIVTTVLILLSIALI). Topologically, residues 33–174 (TFMQYYFTQE…SIEDTNNAIT (142 aa)) are extracellular. A helical transmembrane segment spans residues 175–195 (IITIITAVIFLTITTVFAFFL). Residues 196–583 (SSRITKPLRR…TFIIKLPKPE (388 aa)) lie on the Cytoplasmic side of the membrane. Residues 197–249 (SRITKPLRRLRDQATRVSEGDYSYKPSVTTKDEIGQLSQAFNQMSTEIEEHVD) form the HAMP domain. In terms of domain architecture, Histidine kinase spans 366–583 (NVSHELRTPI…TFIIKLPKPE (218 aa)). His-369 bears the Phosphohistidine; by autocatalysis mark.

The protein resides in the cell membrane. The catalysed reaction is ATP + protein L-histidine = ADP + protein N-phospho-L-histidine.. Functionally, member of the two-component regulatory system SrrA/SrrB, which is involved in the global regulation of staphylococcal virulence factors in response to environmental oxygen levels as well as biofilm formation. Also plays an essential role in host-derived nitric oxide resistance by regulating hmp/flavohemoglobin, an enzyme that detoxifies nitric oxide by converting it to nitrate. Functions as a sensor protein kinase which is autophosphorylated at a histidine residue and transfers its phosphate group to SrrA. In turn, SrrA binds to the upstream promoter regions of the target genes to positively and negatively regulate their expression. The chain is Sensor protein SrrB (srrB) from Staphylococcus aureus (strain MRSA252).